Reading from the N-terminus, the 487-residue chain is GlcNAc-binding protein A (487 aa).

The signal sequence occupies residues 1–29; that stretch reads MKKLPNKSLIALALLSVSGASFGHGYVSA. Residues 30-201 enclose the Chitin-binding type-4 domain; that stretch reads YENGVAEGRA…SFYNVIDVKF (172 aa). In terms of domain architecture, Chitin-binding type-3 spans 438-479; sequence AGTKVLASDGAVYQCKEFPFSGYCTQWSPSATQFEPGKGSHW.

It belongs to the GbpA family.

Its subcellular location is the secreted. Its function is as follows. Probably interacts with GlcNAc residues. May promote attachment to both epithelial cell surfaces and chitin. The sequence is that of GlcNAc-binding protein A from Vibrio campbellii (strain ATCC BAA-1116).